Reading from the N-terminus, the 398-residue chain is Succinate--CoA ligase [ADP-forming] subunit beta (398 aa).

The region spanning 9–253 (KEILASYGVR…IREENPIEVE (245 aa)) is the ATP-grasp domain. ATP is bound by residues Lys50, 57 to 59 (GRG), Val106, and Glu116. The Mg(2+) site is built by Asn208 and Asp222. Residues Asn273 and 330 to 332 (GIV) each bind substrate.

Belongs to the succinate/malate CoA ligase beta subunit family. Heterotetramer of two alpha and two beta subunits. The cofactor is Mg(2+).

The catalysed reaction is succinate + ATP + CoA = succinyl-CoA + ADP + phosphate. It carries out the reaction GTP + succinate + CoA = succinyl-CoA + GDP + phosphate. It participates in carbohydrate metabolism; tricarboxylic acid cycle; succinate from succinyl-CoA (ligase route): step 1/1. Functionally, succinyl-CoA synthetase functions in the citric acid cycle (TCA), coupling the hydrolysis of succinyl-CoA to the synthesis of either ATP or GTP and thus represents the only step of substrate-level phosphorylation in the TCA. The beta subunit provides nucleotide specificity of the enzyme and binds the substrate succinate, while the binding sites for coenzyme A and phosphate are found in the alpha subunit. This is Succinate--CoA ligase [ADP-forming] subunit beta from Flavobacterium psychrophilum (strain ATCC 49511 / DSM 21280 / CIP 103535 / JIP02/86).